A 739-amino-acid polypeptide reads, in one-letter code: MPRKMVVIFGASNILWMVFAVSQASKMEIFLEPRVAAQIGDVISLTCSTTGCETPSFSWRTQIDSPLNGKVKNEGNNSTLTMDPVSFNNEHAYLCTATCGSKKLEKGIQVEIYSFPKDPEIQLSGPLEVGKPVTVTCLVRDVYPFDRLEMNLLNGNDLLQSKDFLEPMEKKSLETKSLEVTFTPTNEDIGKGLVCRAQLHMDEIDFEPKERETTKELQVYISPRNTFISVTPSMRLQEGGSVTMTCASEGLPPPQIFWSKKLDNGNLQLLSGNATLTLIAMRLEDSGTYVCEGVNEVGKDGKEVELIVQEKPFTVEISPGPQIIAQIGDSVVLTCGVTDCESPSFSWRTQIDSPLSGTVKVEGAKSTLTLSPVNLENEHSYLCTVTCGHKKLEKGIKVDLYSFPRDPEVEMSGLLVDGNPVTVSCEVPNVYPSDRLEIELFKGETIIESKSFLEDMDKKSLETKSLEMTFIPTTEDTGKVLVCLAKLHIDEMEFEPKQRQSTQTLYVNVAPRDTTVVVSPSSIVEEGSPVNMTCSSDGLPAPNILWSRRLSNGRLQSLSEDPILTLTSAKMEDSGIYVCEGINQAGISRKEVELIIQVAPKDIQLIAFPSESVKEGDTVIISCTCGNVPKTWIILKKKAETGDTVLKSRDGAYTIHKVQLEDAGVYECESKNEAGLQLRSLTLDVKGRENNKDYFSPELLVLYCASSLIIPAIGMIIYFARRANMKGSYSLVEAQKSKV.

The N-terminal stretch at 1 to 24 (MPRKMVVIFGASNILWMVFAVSQA) is a signal peptide. Ig-like C2-type domains are found at residues 25–105 (SKME…KKLE), 109–212 (QVEI…KERE), 223–309 (PRNT…LIVQ), 312–399 (PFTV…IKVD), 408–506 (EVEM…QTLY), 511–595 (PRDT…VELI), and 600–684 (PKDI…LTLD). Residues 25-698 (SKMEIFLEPR…ENNKDYFSPE (674 aa)) are Extracellular-facing. 5 cysteine pairs are disulfide-bonded: Cys47-Cys95, Cys52-Cys99, Cys137-Cys195, Cys246-Cys291, and Cys335-Cys383. N-linked (GlcNAc...) asparagine glycans are attached at residues Asn76 and Asn77. Residue Asn273 is glycosylated (N-linked (GlcNAc...) asparagine). Residue Asn531 is glycosylated (N-linked (GlcNAc...) asparagine). Cys534 and Cys579 are disulfide-bonded. The chain crosses the membrane as a helical span at residues 699–720 (LLVLYCASSLIIPAIGMIIYFA). The Cytoplasmic segment spans residues 721-739 (RRANMKGSYSLVEAQKSKV).

Cleaved by the metalloproteinase ADAM17 to generate the soluble form. Post-translationally, sialoglycoprotein. In terms of processing, ubiquitinated by TRIM65 via 'Lys-48'-linked ubiquitination; leading to proteasomal degradation.

It localises to the cell membrane. The protein localises to the secreted. Cell adhesion glycoprotein predominantly expressed on the surface of endothelial cells that plays an important role in immune surveillance and inflammation. Acts as a major regulator of leukocyte adhesion to the endothelium through interaction with different types of integrins. During inflammatory responses, binds ligands on the surface of activated endothelial cells to initiate the activation of calcium channels and the plasma membrane-associated small GTPase RAC1 leading to leukocyte transendothelial migration. Also serves as a quality-control checkpoint for entry into bone marrow by providing a 'don't-eat-me' stamping in the context of major histocompatibility complex (MHC) class-I presentation. In Canis lupus familiaris (Dog), this protein is Vascular cell adhesion protein 1 (VCAM1).